The following is a 245-amino-acid chain: 1-(5-phosphoribosyl)-5-[(5-phosphoribosylamino)methylideneamino] imidazole-4-carboxamide isomerase (245 aa).

Asp7 serves as the catalytic Proton acceptor. Residue Asp129 is the Proton donor of the active site.

The protein belongs to the HisA/HisF family.

Its subcellular location is the cytoplasm. It catalyses the reaction 1-(5-phospho-beta-D-ribosyl)-5-[(5-phospho-beta-D-ribosylamino)methylideneamino]imidazole-4-carboxamide = 5-[(5-phospho-1-deoxy-D-ribulos-1-ylimino)methylamino]-1-(5-phospho-beta-D-ribosyl)imidazole-4-carboxamide. It participates in amino-acid biosynthesis; L-histidine biosynthesis; L-histidine from 5-phospho-alpha-D-ribose 1-diphosphate: step 4/9. In Escherichia coli (strain SMS-3-5 / SECEC), this protein is 1-(5-phosphoribosyl)-5-[(5-phosphoribosylamino)methylideneamino] imidazole-4-carboxamide isomerase.